A 399-amino-acid chain; its full sequence is Phosphoglycerate kinase (399 aa).

Substrate is bound by residues 21-23 (DFN), R37, 60-63 (HLGR), R119, and R152. ATP-binding positions include K205, G296, E327, and 353-356 (GGDT).

Belongs to the phosphoglycerate kinase family. Monomer.

It localises to the cytoplasm. The catalysed reaction is (2R)-3-phosphoglycerate + ATP = (2R)-3-phospho-glyceroyl phosphate + ADP. The protein operates within carbohydrate degradation; glycolysis; pyruvate from D-glyceraldehyde 3-phosphate: step 2/5. This Sulfurimonas denitrificans (strain ATCC 33889 / DSM 1251) (Thiomicrospira denitrificans (strain ATCC 33889 / DSM 1251)) protein is Phosphoglycerate kinase.